Consider the following 309-residue polypeptide: Elongation factor Ts (309 aa).

The interval 82 to 85 is involved in Mg(2+) ion dislocation from EF-Tu; the sequence is TDFV.

It belongs to the EF-Ts family.

It localises to the cytoplasm. Functionally, associates with the EF-Tu.GDP complex and induces the exchange of GDP to GTP. It remains bound to the aminoacyl-tRNA.EF-Tu.GTP complex up to the GTP hydrolysis stage on the ribosome. This is Elongation factor Ts from Rickettsia africae (strain ESF-5).